The primary structure comprises 87 residues: NADH dehydrogenase [ubiquinone] 1 alpha subcomplex subunit 4-like 2 (87 aa).

The protein belongs to the complex I NDUFA4 subunit family.

This chain is NADH dehydrogenase [ubiquinone] 1 alpha subcomplex subunit 4-like 2 (NDUFA4L2), found in Homo sapiens (Human).